The sequence spans 214 residues: Large ribosomal subunit protein uL4c (214 aa).

Residues 43–80 (KQSNEKRQGSANTKTRSEVRGGGRKPWRQKGTGRARAG) are disordered. The segment covering 64–75 (GGRKPWRQKGTG) has biased composition (basic residues).

The protein belongs to the universal ribosomal protein uL4 family. Part of the 50S ribosomal subunit.

It localises to the plastid. The protein resides in the chloroplast. In terms of biological role, probably binds the 23S rRNA. The sequence is that of Large ribosomal subunit protein uL4c (rpl4) from Porphyra purpurea (Red seaweed).